The following is a 607-amino-acid chain: MSRIAILPSAVADQIAAGEVVERPASVVKELVENALDAGATSVDITIEDGGRTLIRIADNGSGMDGADAVLALSRHATSKITSAEQLVGVRSFGFRGEALPAIASVSELQIETASEDGSGTLVRVQAGTLTETGQVARRQGTTVSVHRLFHNTPARLKFMRSARSEWRAIVDAMQAIGVLRRDVHFTVRHDGRVALDWPAVSTLRARLAALWGAADVERFVDVDDVQGVVHVSGLAERPADVGTATRRVLLIVNGRVVRDHGLIRAAEAAYRSTIPAGMRPSLVLQVHVPGGDVDVNVHPAKAEVRFRDRWPLERAVEEAVRRALGLFDASAGIGWRTWSAAPASREPGHALGGIPLEPSALRAAPAPEGLFATPAAADANLAQHAIATATAPTADDLTSAMQVDAMRAEAAREMETLVVPPLMQLRKTYLMFEHDEGVVLIDQHSAHERVLYEQFLGVLERGEAPSQRLLFPLTLHLGPQEADAFEAHRDAFVRLGFEIDHFGGTSLLVQAVPMPHPRFDAERCLRDTLAALIGDRGASAAAKHERLAATFACKAAIKAGDQMSPGEMQALYRALAATVLPAHDVHGRSTIVRLSWDELDRRFGRK.

It belongs to the DNA mismatch repair MutL/HexB family.

This protein is involved in the repair of mismatches in DNA. It is required for dam-dependent methyl-directed DNA mismatch repair. May act as a 'molecular matchmaker', a protein that promotes the formation of a stable complex between two or more DNA-binding proteins in an ATP-dependent manner without itself being part of a final effector complex. In Gemmatimonas aurantiaca (strain DSM 14586 / JCM 11422 / NBRC 100505 / T-27), this protein is DNA mismatch repair protein MutL.